The following is a 329-amino-acid chain: Trans-1,2-dihydrobenzene-1,2-diol dehydrogenase (329 aa).

Belongs to the Gfo/Idh/MocA family. Homodimer. As to expression, lens, liver and small intestine.

It catalyses the reaction (1R,2R)-1,2-dihydrobenzene-1,2-diol + NADP(+) = catechol + NADPH + H(+). The enzyme catalyses D-xylose + NADP(+) = D-xylono-1,5-lactone + NADPH + H(+). With respect to regulation, stimulated by various salts. This is Trans-1,2-dihydrobenzene-1,2-diol dehydrogenase (DHDH) from Oryctolagus cuniculus (Rabbit).